A 433-amino-acid polypeptide reads, in one-letter code: AP-2 complex subunit mu (433 aa).

An MHD domain is found at 168–432 (RNELFLDVLE…IGRSGIYETR (265 aa)). A 1,2-diacyl-sn-glycero-3-phospho-(1D-myo-inositol-3,4,5-trisphosphate) is bound by residues Lys-339, Lys-343, and Lys-352.

The protein belongs to the adaptor complexes medium subunit family. In terms of assembly, adaptor protein complex 2 (AP-2) is a heterotetramer composed of two large adaptins (alpha-type subunit and beta-type subunit), a medium adaptin (mu-type subunit) and a small adaptin (sigma-type subunit).

It is found in the cell membrane. Its subcellular location is the membrane. The protein resides in the coated pit. Its function is as follows. Component of the adaptor complexes which link clathrin to receptors in coated vesicles. Clathrin-associated protein complexes are believed to interact with the cytoplasmic tails of membrane proteins, leading to their selection and concentration. AP50 is a subunit of the plasma membrane adaptor. The complex binds polyphosphoinositide-containing lipids. The polypeptide is AP-2 complex subunit mu (AP2M1) (Gallus gallus (Chicken)).